The sequence spans 142 residues: Large ribosomal subunit protein uL13 (142 aa).

The protein belongs to the universal ribosomal protein uL13 family. As to quaternary structure, part of the 50S ribosomal subunit.

Its function is as follows. This protein is one of the early assembly proteins of the 50S ribosomal subunit, although it is not seen to bind rRNA by itself. It is important during the early stages of 50S assembly. The chain is Large ribosomal subunit protein uL13 from Tolumonas auensis (strain DSM 9187 / NBRC 110442 / TA 4).